The primary structure comprises 188 residues: Translation initiation factor IF-3 (188 aa).

Belongs to the IF-3 family. As to quaternary structure, monomer.

It localises to the cytoplasm. IF-3 binds to the 30S ribosomal subunit and shifts the equilibrium between 70S ribosomes and their 50S and 30S subunits in favor of the free subunits, thus enhancing the availability of 30S subunits on which protein synthesis initiation begins. The sequence is that of Translation initiation factor IF-3 from Fusobacterium nucleatum subsp. nucleatum (strain ATCC 25586 / DSM 15643 / BCRC 10681 / CIP 101130 / JCM 8532 / KCTC 2640 / LMG 13131 / VPI 4355).